We begin with the raw amino-acid sequence, 614 residues long: Glutamine--fructose-6-phosphate aminotransferase [isomerizing] (614 aa).

The active-site Nucleophile; for GATase activity is Cys-2. Residues 2-221 (CGIVGYIGKR…DGEIAVINRG (220 aa)) enclose the Glutamine amidotransferase type-2 domain. 2 consecutive SIS domains span residues 291 to 430 (YKEK…EKGT) and 463 to 604 (LSKT…VDQP). The active-site For Fru-6P isomerization activity is the Lys-609.

In terms of assembly, homodimer.

The protein localises to the cytoplasm. It catalyses the reaction D-fructose 6-phosphate + L-glutamine = D-glucosamine 6-phosphate + L-glutamate. Its function is as follows. Catalyzes the first step in hexosamine metabolism, converting fructose-6P into glucosamine-6P using glutamine as a nitrogen source. The protein is Glutamine--fructose-6-phosphate aminotransferase [isomerizing] of Bacteroides thetaiotaomicron (strain ATCC 29148 / DSM 2079 / JCM 5827 / CCUG 10774 / NCTC 10582 / VPI-5482 / E50).